Here is a 503-residue protein sequence, read N- to C-terminus: Probable cytosol aminopeptidase (503 aa).

Mn(2+)-binding residues include lysine 274 and aspartate 279. Residue lysine 286 is part of the active site. 3 residues coordinate Mn(2+): aspartate 297, aspartate 356, and glutamate 358. Arginine 360 is an active-site residue.

Belongs to the peptidase M17 family. Mn(2+) is required as a cofactor.

The protein localises to the cytoplasm. It carries out the reaction Release of an N-terminal amino acid, Xaa-|-Yaa-, in which Xaa is preferably Leu, but may be other amino acids including Pro although not Arg or Lys, and Yaa may be Pro. Amino acid amides and methyl esters are also readily hydrolyzed, but rates on arylamides are exceedingly low.. The enzyme catalyses Release of an N-terminal amino acid, preferentially leucine, but not glutamic or aspartic acids.. Its function is as follows. Presumably involved in the processing and regular turnover of intracellular proteins. Catalyzes the removal of unsubstituted N-terminal amino acids from various peptides. This is Probable cytosol aminopeptidase from Burkholderia thailandensis (strain ATCC 700388 / DSM 13276 / CCUG 48851 / CIP 106301 / E264).